Reading from the N-terminus, the 461-residue chain is Asparagine--tRNA ligase (461 aa).

It belongs to the class-II aminoacyl-tRNA synthetase family. Homodimer.

The protein localises to the cytoplasm. It carries out the reaction tRNA(Asn) + L-asparagine + ATP = L-asparaginyl-tRNA(Asn) + AMP + diphosphate + H(+). This Geotalea uraniireducens (strain Rf4) (Geobacter uraniireducens) protein is Asparagine--tRNA ligase.